The primary structure comprises 132 residues: Fluoride-specific ion channel FluC 1 (132 aa).

A run of 4 helical transmembrane segments spans residues 11–31 (AVFA…ALAI), 37–57 (WPWP…YFTT), 70–92 (RPLL…VETI), and 105–125 (AYSV…TVLV). Na(+) contacts are provided by glycine 79 and threonine 82.

It belongs to the fluoride channel Fluc/FEX (TC 1.A.43) family.

The protein localises to the cell membrane. The enzyme catalyses fluoride(in) = fluoride(out). Its activity is regulated as follows. Na(+) is not transported, but it plays an essential structural role and its presence is essential for fluoride channel function. Its function is as follows. Fluoride-specific ion channel. Important for reducing fluoride concentration in the cell, thus reducing its toxicity. In Mycobacterium bovis (strain ATCC BAA-935 / AF2122/97), this protein is Fluoride-specific ion channel FluC 1.